The chain runs to 499 residues: Cytochrome P450 710A2 (499 aa).

The chain crosses the membrane as a helical span at residues 5 to 25 (VSIFASLAPYLVSALLLFFLI). Position 439 (cysteine 439) interacts with heme.

The protein belongs to the cytochrome P450 family. Heme is required as a cofactor. As to expression, expressed in the vascular tissues of roots, shoots, stems and leaves. Expressed in root tips, carpes, siliques and seeds.

Its subcellular location is the membrane. The enzyme catalyses 5-dehydroepisterol + NADPH + O2 + H(+) = ergosta-5,7,22,24(28)-tetraen-3beta-ol + NADP(+) + 2 H2O. Its pathway is steroid biosynthesis; sterol biosynthesis. In terms of biological role, required to form the C-22 double bond in the sterol side chain. Possesses in vitro C-22 desaturase activity toward 24-epi-campesterol and beta-sitosterol and produces brassicasterol and stigmasterol, respectively. No activity with campesterol. In Arabidopsis thaliana (Mouse-ear cress), this protein is Cytochrome P450 710A2.